Consider the following 439-residue polypeptide: MTAFPDVPVIQYEGPQSDNPLAFRWYNPDEVIEGKTMKDHMRFSIVYWHTFRGTGADPFGPGTAVRPWDNGSESVENAQKRAVVAFELFTKLQAPYYAWHDRDVAPEGANLRETHANLDAVADVLEEQQKATGVKLLWGTANMFSNPRFMHGAATSCNADVFAYAGAQVKKALEVTKRLGGENYVFWGGREGYQNLYNTDMKRELDHLAKFFHMAVDYAKSIGFDGQFLIEPKPKEPTKHQYDSDAAACMNFLRAYDLDSHFKLNIETNHATLAGHTMMHELDYAGIQGGLGSIDANTGDLLLGWDTDQFPTDYYLTTQTMLMILKHGGIGTGGVNFDAKVRRESFEPIDLFHAHIGGMDAFAKGLKIAAAIRASGELADFVKNRYSTWDSGIGAKIEAGEVGFAELEAYMLEKGDVDANQSGRQEYLEHMINKYIDRV.

Catalysis depends on residues H100 and D103. Mg(2+) contacts are provided by E231, E267, H270, D295, D306, D308, and D338.

Belongs to the xylose isomerase family. Homotetramer. Requires Mg(2+) as cofactor.

The protein resides in the cytoplasm. It carries out the reaction alpha-D-xylose = alpha-D-xylulofuranose. This chain is Xylose isomerase, found in Rhodopirellula baltica (strain DSM 10527 / NCIMB 13988 / SH1).